We begin with the raw amino-acid sequence, 341 residues long: Glycerol-3-phosphate dehydrogenase [NAD(P)+] (341 aa).

4 residues coordinate NADPH: S11, W12, R33, and K106. K106, G137, and S139 together coordinate sn-glycerol 3-phosphate. Residue A141 participates in NADPH binding. Residues K192, D245, S255, R256, and N257 each contribute to the sn-glycerol 3-phosphate site. Residue K192 is the Proton acceptor of the active site. R256 is an NADPH binding site. 2 residues coordinate NADPH: V280 and E282.

Belongs to the NAD-dependent glycerol-3-phosphate dehydrogenase family.

It is found in the cytoplasm. It catalyses the reaction sn-glycerol 3-phosphate + NAD(+) = dihydroxyacetone phosphate + NADH + H(+). It carries out the reaction sn-glycerol 3-phosphate + NADP(+) = dihydroxyacetone phosphate + NADPH + H(+). Its pathway is membrane lipid metabolism; glycerophospholipid metabolism. Catalyzes the reduction of the glycolytic intermediate dihydroxyacetone phosphate (DHAP) to sn-glycerol 3-phosphate (G3P), the key precursor for phospholipid synthesis. The polypeptide is Glycerol-3-phosphate dehydrogenase [NAD(P)+] (Bacillus cytotoxicus (strain DSM 22905 / CIP 110041 / 391-98 / NVH 391-98)).